A 78-amino-acid polypeptide reads, in one-letter code: Translational regulator CsrA (78 aa).

It belongs to the CsrA/RsmA family. In terms of assembly, homodimer; the beta-strands of each monomer intercalate to form a hydrophobic core, while the alpha-helices form wings that extend away from the core.

The protein resides in the cytoplasm. Functionally, a translational regulator that binds mRNA to regulate translation initiation and/or mRNA stability. Usually binds in the 5'-UTR at or near the Shine-Dalgarno sequence preventing ribosome-binding, thus repressing translation. Its main target seems to be the major flagellin gene, while its function is anatagonized by FliW. This Geobacter metallireducens (strain ATCC 53774 / DSM 7210 / GS-15) protein is Translational regulator CsrA.